The chain runs to 262 residues: Pyridoxine 5'-phosphate synthase (262 aa).

Asparagine 6 is a 3-amino-2-oxopropyl phosphate binding site. 8-9 (DH) contacts 1-deoxy-D-xylulose 5-phosphate. Arginine 17 is a binding site for 3-amino-2-oxopropyl phosphate. Histidine 41 acts as the Proton acceptor in catalysis. 1-deoxy-D-xylulose 5-phosphate-binding residues include arginine 43 and histidine 48. The active-site Proton acceptor is the glutamate 68. Threonine 98 serves as a coordination point for 1-deoxy-D-xylulose 5-phosphate. The Proton donor role is filled by histidine 210. 3-amino-2-oxopropyl phosphate-binding positions include glycine 211 and 232–233 (GQ).

Belongs to the PNP synthase family. In terms of assembly, homooctamer; tetramer of dimers.

Its subcellular location is the cytoplasm. The enzyme catalyses 3-amino-2-oxopropyl phosphate + 1-deoxy-D-xylulose 5-phosphate = pyridoxine 5'-phosphate + phosphate + 2 H2O + H(+). It participates in cofactor biosynthesis; pyridoxine 5'-phosphate biosynthesis; pyridoxine 5'-phosphate from D-erythrose 4-phosphate: step 5/5. Its function is as follows. Catalyzes the complicated ring closure reaction between the two acyclic compounds 1-deoxy-D-xylulose-5-phosphate (DXP) and 3-amino-2-oxopropyl phosphate (1-amino-acetone-3-phosphate or AAP) to form pyridoxine 5'-phosphate (PNP) and inorganic phosphate. The polypeptide is Pyridoxine 5'-phosphate synthase (Campylobacter jejuni subsp. jejuni serotype O:23/36 (strain 81-176)).